We begin with the raw amino-acid sequence, 367 residues long: Apurinic-apyrimidinic endonuclease 1 (367 aa).

Residues H83, H123, E158, D192, H195, H229, D242, H244, and E274 each coordinate Zn(2+). The disordered stretch occupies residues 312–367 (DTLQKLGAKSRKEQLDKFEVKQKKRAGGTKRKKATAEPSDNDILSQMTKKRKTKKE). Basic and acidic residues predominate over residues 321 to 332 (SRKEQLDKFEVK). A compositionally biased stretch (basic residues) spans 333 to 344 (QKKRAGGTKRKK). Position 356 is a phosphoserine (S356).

Belongs to the AP endonuclease 2 family. Monomer. The cofactor is Zn(2+).

It is found in the nucleus. In terms of biological role, DNA repair enzyme that cleaves apurinic/apyrimidinic (AP) sites and removes 3'-blocking groups present at single strand breaks of damaged DNA. APN1 accounts for &gt; 97% of both apurinic/apyrimidinic (AP) endonuclease and DNA 3'-repair diesterase activities. The polypeptide is Apurinic-apyrimidinic endonuclease 1 (APN1) (Saccharomyces cerevisiae (strain ATCC 204508 / S288c) (Baker's yeast)).